The sequence spans 78 residues: Large ribosomal subunit protein bL28 (78 aa).

This sequence belongs to the bacterial ribosomal protein bL28 family.

In Erwinia tasmaniensis (strain DSM 17950 / CFBP 7177 / CIP 109463 / NCPPB 4357 / Et1/99), this protein is Large ribosomal subunit protein bL28.